Consider the following 503-residue polypeptide: Maturase K (503 aa).

Belongs to the intron maturase 2 family. MatK subfamily.

The protein localises to the plastid. It is found in the chloroplast. Usually encoded in the trnK tRNA gene intron. Probably assists in splicing its own and other chloroplast group II introns. This is Maturase K from Actinodium cunninghamii (Albany daisy).